Reading from the N-terminus, the 218-residue chain is Small ribosomal subunit protein uS3c (218 aa).

The 76-residue stretch at 43–118 folds into the KH type-2 domain; that stretch reads IKNYVQKNMK…KLNISITRIE (76 aa).

The protein belongs to the universal ribosomal protein uS3 family. Part of the 30S ribosomal subunit.

Its subcellular location is the plastid. It is found in the chloroplast. The protein is Small ribosomal subunit protein uS3c (rps3) of Populus trichocarpa (Western balsam poplar).